Here is a 213-residue protein sequence, read N- to C-terminus: Phosphatidylcholine transfer protein (213 aa).

An N-acetylmethionine modification is found at Met1. Residues 1–212 (MDPGAGAFSE…MVKACQNYKK (212 aa)) form the START domain. The a 1,2-diacyl-sn-glycero-3-phosphocholine site is built by Tyr72 and Arg78. Phosphoserine is present on Ser139. Position 157 (Gln157) interacts with a 1,2-diacyl-sn-glycero-3-phosphocholine. A part of the binding site for phosphatidylcholine region spans residues 171–176 (VFMYYF).

Interacts with ACOT13/THEM2.

The protein localises to the cytoplasm. In terms of biological role, catalyzes the transfer of phosphatidylcholine between membranes. Binds phosphatidylcholine in a tight 1:1 stoichiometric complex. This Bos taurus (Bovine) protein is Phosphatidylcholine transfer protein (PCTP).